Here is a 228-residue protein sequence, read N- to C-terminus: Urease accessory protein UreF (228 aa).

It belongs to the UreF family. UreD, UreF and UreG form a complex that acts as a GTP-hydrolysis-dependent molecular chaperone, activating the urease apoprotein by helping to assemble the nickel containing metallocenter of UreC. The UreE protein probably delivers the nickel.

It localises to the cytoplasm. In terms of biological role, required for maturation of urease via the functional incorporation of the urease nickel metallocenter. In Brucella ovis (strain ATCC 25840 / 63/290 / NCTC 10512), this protein is Urease accessory protein UreF.